The primary structure comprises 385 residues: SH3 domain-binding protein 5-like (385 aa).

A disordered region spans residues 1 to 58; it reads MAELRQIPGGRETPQGELRPEVVEDEVPRSPVAEEPGGGGSNSSEAKLSPREEEELDP. Residue threonine 13 is modified to Phosphothreonine. The segment covering 18 to 28 has biased composition (basic and acidic residues); the sequence is LRPEVVEDEVP. Serine 30 and serine 49 each carry phosphoserine. Coiled coils occupy residues 59 to 140 and 169 to 272; these read RIQE…YERA and WQEM…EQIH. The disordered stretch occupies residues 272-328; it reads HARRRGQPAHTPGQRRSSPVGAEAGPDGGEDADSGIIEGAEGGGLEEGVSLGPGAAP. The span at 318 to 328 shows a compositional bias: low complexity; that stretch reads EGVSLGPGAAP. Serine 343, serine 350, serine 358, and serine 362 each carry phosphoserine. Positions 359 to 385 are disordered; sequence DHTSLDGQELGPRSGGRGGRHQRSISL. Basic residues predominate over residues 376 to 385; that stretch reads GGRHQRSISL.

Belongs to the SH3BP5 family.

Functionally, functions as a guanine nucleotide exchange factor (GEF) for RAB11A. This Bos taurus (Bovine) protein is SH3 domain-binding protein 5-like (SH3BP5L).